The primary structure comprises 491 residues: Probable glycine dehydrogenase (decarboxylating) subunit 2 (491 aa).

K273 is modified (N6-(pyridoxal phosphate)lysine).

It belongs to the GcvP family. C-terminal subunit subfamily. In terms of assembly, the glycine cleavage system is composed of four proteins: P, T, L and H. In this organism, the P 'protein' is a heterodimer of two subunits. The cofactor is pyridoxal 5'-phosphate.

It catalyses the reaction N(6)-[(R)-lipoyl]-L-lysyl-[glycine-cleavage complex H protein] + glycine + H(+) = N(6)-[(R)-S(8)-aminomethyldihydrolipoyl]-L-lysyl-[glycine-cleavage complex H protein] + CO2. In terms of biological role, the glycine cleavage system catalyzes the degradation of glycine. The P protein binds the alpha-amino group of glycine through its pyridoxal phosphate cofactor; CO(2) is released and the remaining methylamine moiety is then transferred to the lipoamide cofactor of the H protein. This is Probable glycine dehydrogenase (decarboxylating) subunit 2 from Bacillus thuringiensis (strain Al Hakam).